The primary structure comprises 133 residues: Large ribosomal subunit protein bL20 (133 aa).

The protein belongs to the bacterial ribosomal protein bL20 family.

In terms of biological role, binds directly to 23S ribosomal RNA and is necessary for the in vitro assembly process of the 50S ribosomal subunit. It is not involved in the protein synthesizing functions of that subunit. This is Large ribosomal subunit protein bL20 from Bartonella tribocorum (strain CIP 105476 / IBS 506).